A 253-amino-acid chain; its full sequence is Phosphoglycerate mutase 2 (253 aa).

The residue at position 3 (T3) is a Phosphothreonine. Residues 10–17 (RHGESLWN), 23–24 (CG), R62, 89–92 (ERHY), K100, and 116–117 (RR) contribute to the substrate site. The active-site Tele-phosphohistidine intermediate is the H11. Position 14 is a phosphoserine (S14). The Proton donor/acceptor role is filled by E89. S118 carries the post-translational modification Phosphoserine. T121 is subject to Phosphothreonine. Phosphotyrosine occurs at positions 132 and 133. S135 carries the phosphoserine modification. At T152 the chain carries Phosphothreonine. 187–188 (GN) lines the substrate pocket.

The protein belongs to the phosphoglycerate mutase family. BPG-dependent PGAM subfamily. As to quaternary structure, homodimer. Interacts with ENO1. Expressed in the testes (at protein level).

It carries out the reaction (2R)-2-phosphoglycerate = (2R)-3-phosphoglycerate. The enzyme catalyses (2R)-3-phospho-glyceroyl phosphate = (2R)-2,3-bisphosphoglycerate + H(+). Interconversion of 3- and 2-phosphoglycerate with 2,3-bisphosphoglycerate as the primer of the reaction. Can also catalyze the reaction of EC 5.4.2.4 (synthase), but with a reduced activity. The protein is Phosphoglycerate mutase 2 (Pgam2) of Mus musculus (Mouse).